The following is a 101-amino-acid chain: Small ribosomal subunit protein uS10 (101 aa).

This sequence belongs to the universal ribosomal protein uS10 family. As to quaternary structure, part of the 30S ribosomal subunit.

Its function is as follows. Involved in the binding of tRNA to the ribosomes. The sequence is that of Small ribosomal subunit protein uS10 from Parabacteroides distasonis (strain ATCC 8503 / DSM 20701 / CIP 104284 / JCM 5825 / NCTC 11152).